Reading from the N-terminus, the 291-residue chain is tRNA-uridine aminocarboxypropyltransferase 1 (291 aa).

The segment at 158–181 (KNSAYEPSSKRPKFSPENDKNTYE) is disordered. Positions 171 to 181 (FSPENDKNTYE) are enriched in basic and acidic residues. The DXTW signature appears at 199 to 202 (DSTW).

Belongs to the TDD superfamily. DTWD1 family.

Its subcellular location is the nucleus. It catalyses the reaction a uridine in tRNA + S-adenosyl-L-methionine = a 3-[(3S)-3-amino-3-carboxypropyl]uridine in tRNA + S-methyl-5'-thioadenosine + H(+). Functionally, catalyzes the formation of 3-(3-amino-3-carboxypropyl)uridine (acp3U) at position 20 in the D-loop of several cytoplasmic tRNAs (acp3U(20)). This chain is tRNA-uridine aminocarboxypropyltransferase 1, found in Xenopus laevis (African clawed frog).